A 186-amino-acid chain; its full sequence is Threonylcarbamoyl-AMP synthase (186 aa).

The YrdC-like domain maps to 2–186 (VSNLQQVVKA…ARTEQLLRQG (185 aa)).

This sequence belongs to the SUA5 family. TsaC subfamily.

Its subcellular location is the cytoplasm. The enzyme catalyses L-threonine + hydrogencarbonate + ATP = L-threonylcarbamoyladenylate + diphosphate + H2O. Functionally, required for the formation of a threonylcarbamoyl group on adenosine at position 37 (t(6)A37) in tRNAs that read codons beginning with adenine. Catalyzes the conversion of L-threonine, HCO(3)(-)/CO(2) and ATP to give threonylcarbamoyl-AMP (TC-AMP) as the acyladenylate intermediate, with the release of diphosphate. In Vibrio vulnificus (strain CMCP6), this protein is Threonylcarbamoyl-AMP synthase.